We begin with the raw amino-acid sequence, 147 residues long: Large ribosomal subunit protein uL22 (147 aa).

It belongs to the universal ribosomal protein uL22 family. As to quaternary structure, part of the 50S ribosomal subunit.

Functionally, this protein binds specifically to 23S rRNA; its binding is stimulated by other ribosomal proteins, e.g. L4, L17, and L20. It is important during the early stages of 50S assembly. It makes multiple contacts with different domains of the 23S rRNA in the assembled 50S subunit and ribosome. In terms of biological role, the globular domain of the protein is located near the polypeptide exit tunnel on the outside of the subunit, while an extended beta-hairpin is found that lines the wall of the exit tunnel in the center of the 70S ribosome. The sequence is that of Large ribosomal subunit protein uL22 from Fervidobacterium nodosum (strain ATCC 35602 / DSM 5306 / Rt17-B1).